The chain runs to 541 residues: Imidazole glycerol phosphate synthase hisHF (541 aa).

Residues 2 to 214 (IVSIVDYGSG…LTGNYEQPIS (213 aa)) enclose the Glutamine amidotransferase type-1 domain. Catalysis depends on for GATase activity residues Cys80, His189, and Glu191. Positions 228–541 (LTKRIIACLD…LAIHDVLVRT (314 aa)) are cyclase. Active-site residues include Asp237 and Asp396.

The protein in the C-terminal section; belongs to the HisA/HisF family.

The catalysed reaction is 5-[(5-phospho-1-deoxy-D-ribulos-1-ylimino)methylamino]-1-(5-phospho-beta-D-ribosyl)imidazole-4-carboxamide + L-glutamine = D-erythro-1-(imidazol-4-yl)glycerol 3-phosphate + 5-amino-1-(5-phospho-beta-D-ribosyl)imidazole-4-carboxamide + L-glutamate + H(+). It carries out the reaction L-glutamine + H2O = L-glutamate + NH4(+). It participates in amino-acid biosynthesis; L-histidine biosynthesis; L-histidine from 5-phospho-alpha-D-ribose 1-diphosphate: step 5/9. In terms of biological role, IGPS catalyzes the conversion of PRFAR and glutamine to IGP, AICAR and glutamate. The glutaminase domain produces the ammonia necessary for the cyclase domain to produce IGP and AICAR from PRFAR. The ammonia is channeled to the active site of the cyclase domain. The polypeptide is Imidazole glycerol phosphate synthase hisHF (his4) (Schizosaccharomyces pombe (strain 972 / ATCC 24843) (Fission yeast)).